A 273-amino-acid chain; its full sequence is Large ribosomal subunit protein uL2 (273 aa).

The tract at residues 222–273 (GMAMNPVDHPHGGGEGRNKGIQPVSPWGTPAKGYRTRSNKRTDKYIVRRRNK) is disordered. A compositionally biased stretch (basic and acidic residues) spans 229–239 (DHPHGGGEGRN).

It belongs to the universal ribosomal protein uL2 family. In terms of assembly, part of the 50S ribosomal subunit. Forms a bridge to the 30S subunit in the 70S ribosome.

Functionally, one of the primary rRNA binding proteins. Required for association of the 30S and 50S subunits to form the 70S ribosome, for tRNA binding and peptide bond formation. It has been suggested to have peptidyltransferase activity; this is somewhat controversial. Makes several contacts with the 16S rRNA in the 70S ribosome. The protein is Large ribosomal subunit protein uL2 of Tolumonas auensis (strain DSM 9187 / NBRC 110442 / TA 4).